The chain runs to 598 residues: uncharacterized protein (598 aa).

A Phosphoserine modification is found at S46. In terms of domain architecture, SAC spans 106–441 (LQNHLKTGPF…ADYISLSYSG (336 aa)). 2 helical membrane-spanning segments follow: residues 508–528 (TIRC…MTLF) and 535–555 (ILPP…SLYY).

Its subcellular location is the endoplasmic reticulum membrane. This is an uncharacterized protein from Schizosaccharomyces pombe (strain 972 / ATCC 24843) (Fission yeast).